A 485-amino-acid polypeptide reads, in one-letter code: Serine/threonine-protein kinase 4 (485 aa).

Positions 30 to 281 constitute a Protein kinase domain; that stretch reads FDVLEKLGEG…ATELLQHPFI (252 aa). Residues 36-44 and lysine 59 each bind ATP; that span reads LGEGSYGSV. The active-site Proton acceptor is the aspartate 149. Threonine 183 carries the post-translational modification Phosphothreonine; by autocatalysis. Residues 287–313 adopt a coiled-coil conformation; the sequence is ESILRHLINEAQDAKLKRTELKQREVE. The 48-residue stretch at 431 to 478 folds into the SARAH domain; it reads YSFLKDWSVTELQLRLNSLDPMMEQEIEEIHHKYQAKRQPILEAIESK.

Belongs to the protein kinase superfamily. STE Ser/Thr protein kinase family. STE20 subfamily. Homodimer; mediated via the coiled-coil region. Mg(2+) serves as cofactor. Post-translationally, autophosphorylated on Thr-183. In terms of processing, proteolytically cleaved by caspase-3 during apoptosis at Asp-326 resulting in a 37 kDa form. Proteolytic cleavage results in kinase activation and nuclear translocation of the truncated form (MST1/N).

Its subcellular location is the cytoplasm. It localises to the nucleus. It carries out the reaction L-seryl-[protein] + ATP = O-phospho-L-seryl-[protein] + ADP + H(+). The catalysed reaction is L-threonyl-[protein] + ATP = O-phospho-L-threonyl-[protein] + ADP + H(+). The C-terminal non-catalytic region inhibits the kinase activity, the enzyme is activated by caspase-cleavage. Homodimerization and autophosphorylation of Thr-183 is also required for full activation. Stress-activated, pro-apoptotic kinase which, following caspase-cleavage, enters the nucleus and induces chromatin condensation followed by internucleosomal DNA fragmentation. Key component of the Hippo signaling pathway which plays a pivotal role in organ size control and tumor suppression by restricting proliferation and promoting apoptosis. The core of this pathway is composed of a kinase cascade wherein stk3/mst2 and stk4/mst1, in complex with its regulatory protein sav1, phosphorylates and activates lats1/2 in complex with its regulatory protein mob1, which in turn phosphorylates and inactivates yap1 oncoprotein and wwtr1/taz. Phosphorylation of yap1 by lats2 inhibits its translocation into the nucleus to regulate cellular genes important for cell proliferation, cell death, and cell migration. Phosphorylates 'Ser-14' of histone H2B (H2BS14ph) during apoptosis. The sequence is that of Serine/threonine-protein kinase 4 (stk4) from Xenopus tropicalis (Western clawed frog).